The chain runs to 351 residues: Transmembrane and coiled-coil domain-containing protein 5B (351 aa).

Residues 17–214 are a coiled coil; sequence EIPKLEITKQ…WRSSIQSAKT (198 aa). A helical membrane pass occupies residues 292–312; that stretch reads IFVVMIFFRLLGYVLFYLQYI.

It belongs to the TMCO5 family.

Its subcellular location is the membrane. This is Transmembrane and coiled-coil domain-containing protein 5B (TMCO5B) from Bos taurus (Bovine).